A 74-amino-acid chain; its full sequence is Cytochrome c oxidase subunit 3 (74 aa).

Transmembrane regions (helical) follow at residues serine 15 to histidine 37 and serine 42 to tryptophan 59.

This sequence belongs to the cytochrome c oxidase subunit 3 family. Component of the cytochrome c oxidase (complex IV, CIV), a multisubunit enzyme composed of a catalytic core of 3 subunits and several supernumerary subunits. The complex exists as a monomer or a dimer and forms supercomplexes (SCs) in the inner mitochondrial membrane with ubiquinol-cytochrome c oxidoreductase (cytochrome b-c1 complex, complex III, CIII).

The protein localises to the mitochondrion inner membrane. The enzyme catalyses 4 Fe(II)-[cytochrome c] + O2 + 8 H(+)(in) = 4 Fe(III)-[cytochrome c] + 2 H2O + 4 H(+)(out). In terms of biological role, component of the cytochrome c oxidase, the last enzyme in the mitochondrial electron transport chain which drives oxidative phosphorylation. The respiratory chain contains 3 multisubunit complexes succinate dehydrogenase (complex II, CII), ubiquinol-cytochrome c oxidoreductase (cytochrome b-c1 complex, complex III, CIII) and cytochrome c oxidase (complex IV, CIV), that cooperate to transfer electrons derived from NADH and succinate to molecular oxygen, creating an electrochemical gradient over the inner membrane that drives transmembrane transport and the ATP synthase. Cytochrome c oxidase is the component of the respiratory chain that catalyzes the reduction of oxygen to water. Electrons originating from reduced cytochrome c in the intermembrane space (IMS) are transferred via the dinuclear copper A center (CU(A)) of subunit 2 and heme A of subunit 1 to the active site in subunit 1, a binuclear center (BNC) formed by heme A3 and copper B (CU(B)). The BNC reduces molecular oxygen to 2 water molecules using 4 electrons from cytochrome c in the IMS and 4 protons from the mitochondrial matrix. This chain is Cytochrome c oxidase subunit 3 (mt:CoIII), found in Drosophila simulans (Fruit fly).